An 83-amino-acid polypeptide reads, in one-letter code: Small ribosomal subunit protein bS18 (83 aa).

This sequence belongs to the bacterial ribosomal protein bS18 family. In terms of assembly, part of the 30S ribosomal subunit. Forms a tight heterodimer with protein bS6.

Its function is as follows. Binds as a heterodimer with protein bS6 to the central domain of the 16S rRNA, where it helps stabilize the platform of the 30S subunit. The protein is Small ribosomal subunit protein bS18 of Methylobacterium sp. (strain 4-46).